The chain runs to 604 residues: Protein glass (604 aa).

4 disordered regions span residues 111–139 (ISTTPPASSGNGSSNNGAGGGSSGNHGYW), 199–237 (NSHNHGQMHSQHQQHQHQQSQVQASHVGNSLLQSSGGNN), 359–400 (LPPL…SPTS), and 414–434 (EDEEDSNEDLDGDEGSSGGEM). 2 stretches are compositionally biased toward low complexity: residues 117-126 (ASSGNGSSNN) and 200-237 (SHNHGQMHSQHQQHQHQQSQVQASHVGNSLLQSSGGNN). The segment covering 414–427 (EDEEDSNEDLDGDE) has biased composition (acidic residues). 5 C2H2-type zinc fingers span residues 437–459 (NLCRLCGKTYARPSTLKTHLRTH), 465–487 (YRCPDCNKSFSQAANLTAHVRTH), 493–515 (FRCPICDRRFSQSSSVTTHMRTH), 521–543 (YRCSSCKKSFSDSSTLTKHLRIH), and 549–571 (YQCKLCLLRFSQSGNLNRHMRVH). The interval 566-604 (RHMRVHGNNNSSNGSNGATGVGGESSTGSGVGGGNSLLT) is disordered. The segment covering 572–581 (GNNNSSNGSN) has biased composition (low complexity). Positions 582-604 (GATGVGGESSTGSGVGGGNSLLT) are enriched in gly residues.

The protein resides in the nucleus. Transcription factor required for gene expression specific to photoreceptor cells. The protein is Protein glass (gl) of Drosophila melanogaster (Fruit fly).